Here is a 505-residue protein sequence, read N- to C-terminus: Prenylcysteine oxidase 1 (505 aa).

Residues 1–27 (MGRVVAELVSSLLGLWLLLCSCGCPEG) form the signal peptide. N-linked (GlcNAc...) asparagine glycans are attached at residues N196, N323, and N353.

The protein belongs to the prenylcysteine oxidase family. It depends on FAD as a cofactor.

The protein localises to the lysosome. The catalysed reaction is an S-polyprenyl-L-cysteine + O2 + H2O = a polyprenal + L-cysteine + H2O2. It carries out the reaction S-(2E,6E)-farnesyl-L-cysteine + O2 + H2O = (2E,6E)-farnesal + L-cysteine + H2O2. The enzyme catalyses [(2E,6E,10E)-geranylgeranyl]-L-cysteine + O2 + H2O = (2E,6E,10E)-geranylgeranial + L-cysteine + H2O2. Functionally, prenylcysteine oxidase that cleaves the thioether bond of prenyl-L-cysteines, such as farnesylcysteine and geranylgeranylcysteine. Only active against free prenylcysteines and not prenylcysteine residues within prenylated proteins or peptides. Involved in the final step in the degradation of prenylated proteins, by degrading prenylcysteines after the protein has been degraded. The chain is Prenylcysteine oxidase 1 from Pongo abelii (Sumatran orangutan).